Consider the following 406-residue polypeptide: Arginine biosynthesis bifunctional protein ArgJ (406 aa).

Residues T152, K179, T190, E277, N401, and S406 each contribute to the substrate site. T190 functions as the Nucleophile in the catalytic mechanism.

Belongs to the ArgJ family. As to quaternary structure, heterotetramer of two alpha and two beta chains.

The protein localises to the cytoplasm. It catalyses the reaction N(2)-acetyl-L-ornithine + L-glutamate = N-acetyl-L-glutamate + L-ornithine. The enzyme catalyses L-glutamate + acetyl-CoA = N-acetyl-L-glutamate + CoA + H(+). It functions in the pathway amino-acid biosynthesis; L-arginine biosynthesis; L-ornithine and N-acetyl-L-glutamate from L-glutamate and N(2)-acetyl-L-ornithine (cyclic): step 1/1. Its pathway is amino-acid biosynthesis; L-arginine biosynthesis; N(2)-acetyl-L-ornithine from L-glutamate: step 1/4. Its function is as follows. Catalyzes two activities which are involved in the cyclic version of arginine biosynthesis: the synthesis of N-acetylglutamate from glutamate and acetyl-CoA as the acetyl donor, and of ornithine by transacetylation between N(2)-acetylornithine and glutamate. This Neisseria meningitidis serogroup A / serotype 4A (strain DSM 15465 / Z2491) protein is Arginine biosynthesis bifunctional protein ArgJ.